The sequence spans 312 residues: tRNA uridine(34) hydroxylase (312 aa).

The Rhodanese domain maps to 124-218 (SDPEVLLIDT…YLEEVPQEQT (95 aa)). Catalysis depends on Cys-178, which acts as the Cysteine persulfide intermediate. Composition is skewed to basic and acidic residues over residues 279 to 294 (TRES…ELAR) and 302 to 312 (IGRDPRQLNEA). The segment at 279-312 (TRESARERQKQIELARARNQPHPIGRDPRQLNEA) is disordered.

It belongs to the TrhO family.

The catalysed reaction is uridine(34) in tRNA + AH2 + O2 = 5-hydroxyuridine(34) in tRNA + A + H2O. In terms of biological role, catalyzes oxygen-dependent 5-hydroxyuridine (ho5U) modification at position 34 in tRNAs. This Ectopseudomonas mendocina (strain ymp) (Pseudomonas mendocina) protein is tRNA uridine(34) hydroxylase.